The sequence spans 266 residues: Ribosomal RNA small subunit methyltransferase A (266 aa).

The S-adenosyl-L-methionine site is built by Asn-12, Leu-14, Gly-39, Glu-61, Asp-87, and Asn-107.

The protein belongs to the class I-like SAM-binding methyltransferase superfamily. rRNA adenine N(6)-methyltransferase family. RsmA subfamily.

Its subcellular location is the cytoplasm. It carries out the reaction adenosine(1518)/adenosine(1519) in 16S rRNA + 4 S-adenosyl-L-methionine = N(6)-dimethyladenosine(1518)/N(6)-dimethyladenosine(1519) in 16S rRNA + 4 S-adenosyl-L-homocysteine + 4 H(+). In terms of biological role, specifically dimethylates two adjacent adenosines (A1518 and A1519) in the loop of a conserved hairpin near the 3'-end of 16S rRNA in the 30S particle. May play a critical role in biogenesis of 30S subunits. The sequence is that of Ribosomal RNA small subunit methyltransferase A from Nitratidesulfovibrio vulgaris (strain ATCC 29579 / DSM 644 / CCUG 34227 / NCIMB 8303 / VKM B-1760 / Hildenborough) (Desulfovibrio vulgaris).